We begin with the raw amino-acid sequence, 309 residues long: Glycine-rich RNA-binding protein 3, mitochondrial (309 aa).

The transit peptide at 1 to 37 (MAFLSKFGNILKQTTNKQLNAQVSLSSPSLFQAIRCM) directs the protein to the mitochondrion. Residues 40-118 (SKLFIGGMAY…RVVKVNYAND (79 aa)) form the RRM domain. The tract at residues 247 to 309 (FAGDSQFGGS…GEFEDVAKRA (63 aa)) is disordered. Residues 258-273 (VGNSSQFGGDNTQFTA) show a composition bias toward polar residues.

This sequence belongs to the GR-RBP family. In terms of assembly, homodimer. Interacts with ORRM2 and MORF8/RIP1. Interacts with RBG5/ORRM4. Binds to RBG2/ORRM5.

The protein localises to the mitochondrion. Possibly has a role in RNA transcription or processing during stress. Involved in C-to-U editing of mitochondrial RNA. Functions as a minor mitochondrial editing factor. Controls 6 percent of the mitochondrial editing sites. The polypeptide is Glycine-rich RNA-binding protein 3, mitochondrial (Arabidopsis thaliana (Mouse-ear cress)).